The following is a 314-amino-acid chain: tRNA uridine(34) hydroxylase (314 aa).

The region spanning 140 to 234 (SRDDVILVDT…YLEETPAEES (95 aa)) is the Rhodanese domain. The active-site Cysteine persulfide intermediate is the Cys194.

It belongs to the TrhO family.

It catalyses the reaction uridine(34) in tRNA + AH2 + O2 = 5-hydroxyuridine(34) in tRNA + A + H2O. In terms of biological role, catalyzes oxygen-dependent 5-hydroxyuridine (ho5U) modification at position 34 in tRNAs. The chain is tRNA uridine(34) hydroxylase from Acinetobacter baylyi (strain ATCC 33305 / BD413 / ADP1).